We begin with the raw amino-acid sequence, 459 residues long: Ribulose bisphosphate carboxylase (459 aa).

N111 contributes to the substrate binding site. The active-site Proton acceptor is K166. K168 lines the substrate pocket. Mg(2+)-binding residues include K191, D193, and E194. K191 bears the N6-carboxylysine mark. The active-site Proton acceptor is the H287. 3 residues coordinate substrate: R288, H321, and S368.

It belongs to the RuBisCO large chain family. Type II subfamily. In terms of assembly, homodimer. Mg(2+) serves as cofactor.

It carries out the reaction 2 (2R)-3-phosphoglycerate + 2 H(+) = D-ribulose 1,5-bisphosphate + CO2 + H2O. The enzyme catalyses D-ribulose 1,5-bisphosphate + O2 = 2-phosphoglycolate + (2R)-3-phosphoglycerate + 2 H(+). Functionally, ruBisCO catalyzes two reactions: the carboxylation of D-ribulose 1,5-bisphosphate, the primary event in carbon dioxide fixation, as well as the oxidative fragmentation of the pentose substrate. Both reactions occur simultaneously and in competition at the same active site. The chain is Ribulose bisphosphate carboxylase from Cereibacter sphaeroides (strain ATCC 17029 / ATH 2.4.9) (Rhodobacter sphaeroides).